A 194-amino-acid polypeptide reads, in one-letter code: Holliday junction branch migration complex subunit RuvA (194 aa).

The segment at 1–64 is domain I; sequence MIGRITGLLL…EDVHLLFGFM (64 aa). Residues 65–140 form a domain II region; it reads TEQERALFRQ…KIDPVAILSE (76 aa). The tract at residues 140 to 143 is flexible linker; it reads EAGA. The interval 144 to 194 is domain III; it reads AASNVDKDILSALLALGYNGREVNRALEQLSEGVTVSDGIMQSLKFLSKVK.

Belongs to the RuvA family. In terms of assembly, homotetramer. Forms an RuvA(8)-RuvB(12)-Holliday junction (HJ) complex. HJ DNA is sandwiched between 2 RuvA tetramers; dsDNA enters through RuvA and exits via RuvB. An RuvB hexamer assembles on each DNA strand where it exits the tetramer. Each RuvB hexamer is contacted by two RuvA subunits (via domain III) on 2 adjacent RuvB subunits; this complex drives branch migration. In the full resolvosome a probable DNA-RuvA(4)-RuvB(12)-RuvC(2) complex forms which resolves the HJ.

It is found in the cytoplasm. Its function is as follows. The RuvA-RuvB-RuvC complex processes Holliday junction (HJ) DNA during genetic recombination and DNA repair, while the RuvA-RuvB complex plays an important role in the rescue of blocked DNA replication forks via replication fork reversal (RFR). RuvA specifically binds to HJ cruciform DNA, conferring on it an open structure. The RuvB hexamer acts as an ATP-dependent pump, pulling dsDNA into and through the RuvAB complex. HJ branch migration allows RuvC to scan DNA until it finds its consensus sequence, where it cleaves and resolves the cruciform DNA. The chain is Holliday junction branch migration complex subunit RuvA from Nitrosomonas eutropha (strain DSM 101675 / C91 / Nm57).